The following is a 1441-amino-acid chain: Histone-lysine N-methyltransferase SETD5 (1441 aa).

The interval 1-28 (MSIAIPLGVTTPDTSYSDMAAGSDPESV) is disordered. Leu-70 bears the Phosphothreonine mark. 2 positions are modified to phosphoserine: Ser-72 and Val-74. A disordered region spans residues 156 to 202 (TPTSITLTVRRTKPKKRKKSPEKGRAAPKTKKIKNSPSEAQNLDENT). Residues 165–189 (RRTKPKKRKKSPEKGRAAPKTKKIK) show a composition bias toward basic residues. Residues 190–202 (NSPSEAQNLDENT) show a composition bias toward polar residues. The SET domain occupies 269–390 (MQLQLGRVTR…KDAEVTIAFD (122 aa)). 2 disordered regions span residues 417-683 (NPNA…TVIS) and 793-816 (MTQTSSVPQETRTQHLYQSNETSN). 2 stretches are compositionally biased toward acidic residues: residues 450–461 (LEQQNEVPEENP) and 479–501 (EEVDNPEEKPEEEEKEEATDDQE). Low complexity-rich tracts occupy residues 539 to 552 (SSSDIEITTSSSEI) and 561 to 572 (AAPESEVSSPVS). A compositionally biased stretch (polar residues) spans 575–588 (AIPSTPQSTGVNTR). Over residues 611–621 (SRPRPKSRISR) the composition is skewed to basic residues. The span at 635 to 650 (QAIAQQAELSQAALEE) shows a compositional bias: low complexity. Polar residues predominate over residues 652–683 (GSNNSVTPPEAGNTDSSGENRQLTGSDPTVIS). Ser-829 and Ser-852 each carry phosphoserine. Disordered regions lie at residues 849–883 (QPLSPVTPPPPSSGSKSPQLTTPGQTHPGEEECRN), 1036–1228 (DLSR…SKGA), and 1243–1441 (CDSP…TGLS). Residue Thr-855 is modified to Phosphothreonine. A compositionally biased stretch (basic residues) spans 1062–1076 (QRKKVSLLEYRKRKQ). A compositionally biased stretch (low complexity) spans 1087 to 1107 (DSSQSKSKSSGAGQGSSNSVS). The span at 1144-1163 (PSDSRGTSSSHCRPQENISS) shows a compositional bias: polar residues. At Ser-1197 the chain carries Phosphoserine. The span at 1250–1259 (SQSLLQQSSS) shows a compositional bias: low complexity. The span at 1265-1275 (PTQSPGYSYRT) shows a compositional bias: polar residues. Residues 1284–1300 (PSHGSSESSLSSTSYPS) are compositionally biased toward low complexity. The span at 1319–1333 (YYSSQPHSGNSTGSN) shows a compositional bias: polar residues. The span at 1335-1372 (PRRSCSSSAASPTPQGPSDSPTSDSVSQSSTGTLSSTS) shows a compositional bias: low complexity. Polar residues-rich tracts occupy residues 1373 to 1382 (FPQNSRSSLP), 1389 to 1412 (SLPNAGQSAAYQASRVSAVSNSQH), and 1429 to 1441 (LQGSGVKTQTGLS).

Interacts with components of the PAF1 complex (PAF1C) such as LEO1, CTR9 and CDC73. Interacts with NCOR1. Interacts with HDAC3. As to expression, ubiquitously expressed.

Its subcellular location is the nucleus. The protein localises to the chromosome. The catalysed reaction is L-lysyl(9)-[histone H3] + S-adenosyl-L-methionine = N(6)-methyl-L-lysyl(9)-[histone H3] + S-adenosyl-L-homocysteine + H(+). It catalyses the reaction L-lysyl(36)-[histone H3] + 3 S-adenosyl-L-methionine = N(6),N(6),N(6)-trimethyl-L-lysyl(36)-[histone H3] + 3 S-adenosyl-L-homocysteine + 3 H(+). Its function is as follows. Chromatin regulator required for brain development: acts as a regulator of RNA elongation rate, thereby regulating neural stem cell (NSC) proliferation and synaptic transmission. May act by mediating trimethylation of 'Lys-36' of histone H3 (H3K36me3), which is essential to allow on-time RNA elongation dynamics. Also monomethylates 'Lys-9' of histone H3 (H3K9me1) in vitro. The relevance of histone methyltransferase activity is however subject to discussion. The chain is Histone-lysine N-methyltransferase SETD5 from Mus musculus (Mouse).